Reading from the N-terminus, the 321-residue chain is Ornithine carbamoyltransferase (321 aa).

Residues 53–56, glutamine 80, arginine 104, and 131–134 contribute to the carbamoyl phosphate site; these read STRT and HPCQ. L-ornithine is bound by residues asparagine 166, aspartate 230, and 234-235; that span reads SM. Carbamoyl phosphate-binding positions include 270 to 271 and arginine 298; that span reads CL.

It belongs to the aspartate/ornithine carbamoyltransferase superfamily. OTCase family.

It is found in the cytoplasm. It carries out the reaction carbamoyl phosphate + L-ornithine = L-citrulline + phosphate + H(+). Its pathway is amino-acid biosynthesis; L-arginine biosynthesis; L-arginine from L-ornithine and carbamoyl phosphate: step 1/3. Functionally, reversibly catalyzes the transfer of the carbamoyl group from carbamoyl phosphate (CP) to the N(epsilon) atom of ornithine (ORN) to produce L-citrulline. This is Ornithine carbamoyltransferase from Bifidobacterium longum (strain NCC 2705).